A 74-amino-acid chain; its full sequence is Kappa-stichotoxin-Shd5a (74 aa).

Positions 1-22 (MKFQVIAAVLLIAFCLCVVVTA) are cleaved as a signal peptide. A propeptide spanning residues 23–39 (RMELQDVEDVENGFQKR) is cleaved from the precursor. The ShKT domain occupies 42-74 (CIDTIPQSRCTAFQCKHSMKYRLSFCRKTCGTC). Intrachain disulfides connect cysteine 42-cysteine 74, cysteine 51-cysteine 67, and cysteine 56-cysteine 71.

It belongs to the sea anemone type 1 potassium channel toxin family. Type 1a subfamily.

It localises to the secreted. The protein localises to the nematocyst. Inhibits voltage-gated potassium channels (Kv) with higher potency for Kv1.1/KCNA1 and Kv1.3/KCNA3. This chain is Kappa-stichotoxin-Shd5a, found in Stichodactyla haddoni (Saddle carpet anemone).